Reading from the N-terminus, the 309-residue chain is GTP cyclohydrolase MptA (309 aa).

This sequence belongs to the GTP cyclohydrolase IV family. Homodimer. Fe(2+) serves as cofactor.

The enzyme catalyses GTP + H2O = 7,8-dihydroneopterin 2',3'-cyclic phosphate + formate + diphosphate + H(+). Its pathway is cofactor biosynthesis; 5,6,7,8-tetrahydromethanopterin biosynthesis. Its function is as follows. Converts GTP to 7,8-dihydro-D-neopterin 2',3'-cyclic phosphate, the first intermediate in the biosynthesis of coenzyme methanopterin. This Haloarcula marismortui (strain ATCC 43049 / DSM 3752 / JCM 8966 / VKM B-1809) (Halobacterium marismortui) protein is GTP cyclohydrolase MptA.